Consider the following 205-residue polypeptide: Probable NAD(P)H dehydrogenase (quinone) FQR1-like 1 (205 aa).

A Flavodoxin-like domain is found at 5 to 192 (VYIVYYSMYG…GQAFHQGKYI (188 aa)). FMN is bound by residues 11–15 (SMYGH), 112–165 (IFYS…SPYG), and His-136. Residue Tyr-13 participates in NAD(+) binding.

This sequence belongs to the WrbA family. The cofactor is FMN.

The protein resides in the cell membrane. The catalysed reaction is a quinone + NADH + H(+) = a quinol + NAD(+). It carries out the reaction a quinone + NADPH + H(+) = a quinol + NADP(+). In terms of biological role, catalyzes the transfer of electrons from NADH and NADPH to reduce quinone to the hydroquinone state. The chain is Probable NAD(P)H dehydrogenase (quinone) FQR1-like 1 from Arabidopsis thaliana (Mouse-ear cress).